The chain runs to 273 residues: DNA repair protein RecO (273 aa).

The tract at residues 249–273 (GRSLTEEPELKAEQTEAEKESQRPR) is disordered. Basic and acidic residues predominate over residues 252-273 (LTEEPELKAEQTEAEKESQRPR).

This sequence belongs to the RecO family.

Functionally, involved in DNA repair and RecF pathway recombination. This chain is DNA repair protein RecO, found in Heliobacterium modesticaldum (strain ATCC 51547 / Ice1).